The following is a 522-amino-acid chain: Na(+)/H(+) antiporter NhaB (522 aa).

Helical transmembrane passes span 13–33 (FLGN…IINP), 98–118 (LLLV…LFVF), 140–160 (AFLS…SVSV), 239–259 (FFIR…LVCL), 304–324 (AIIG…LVGL), 356–376 (LTVF…TPII), 390–410 (LFYL…VGTV), 446–466 (ATPN…APLI), and 477–497 (ALPY…FLLV).

The protein belongs to the NhaB Na(+)/H(+) (TC 2.A.34) antiporter family.

The protein resides in the cell inner membrane. The catalysed reaction is 2 Na(+)(in) + 3 H(+)(out) = 2 Na(+)(out) + 3 H(+)(in). Functionally, na(+)/H(+) antiporter that extrudes sodium in exchange for external protons. The protein is Na(+)/H(+) antiporter NhaB of Yersinia pestis bv. Antiqua (strain Angola).